Reading from the N-terminus, the 381-residue chain is MIISASTDYRAAAQRKLPPFLFHYIDGGAYAEYTLRRNVEDLSAIALRQRVLKNMSELSLETRLFDETLAMPVALAPVGLTGMYARRGEVQAARAAAAKGVPFTLSTVSVCPIEEVAPAIDRPMWFQLYVLKDRGFMRNALERAKAAGVTTLVFTVDMPVPGARYRDAHSGMSGPYAAPRRILQAMTHPAWAWDVGLLGKPHDLGNISTYRGNPTGLEDYIGWLGANFDPSISWKDLEWIREFWNGPMVIKGILDPEDAKDAVKFGADGIVVSNHGGRQLDGVLSSARALPAIADAVKGELAILADSGIRTGLDVVRMIALGADSVLLGRAFVYALAAAGEAGVRNLLELIEKEMRVAMVLTGAKSIGEISADSLVRELGA.

The FMN hydroxy acid dehydrogenase domain maps to 1–380 (MIISASTDYR…SADSLVRELG (380 aa)). Tyr24 is a binding site for substrate. FMN contacts are provided by Ser106 and Gln127. A substrate-binding site is contributed by Tyr129. An FMN-binding site is contributed by Thr155. Position 164 (Arg164) interacts with substrate. Residue Lys251 participates in FMN binding. The Proton acceptor role is filled by His275. Residue Arg278 coordinates substrate. 306 to 330 (DSGIRTGLDVVRMIALGADSVLLGR) contributes to the FMN binding site.

This sequence belongs to the FMN-dependent alpha-hydroxy acid dehydrogenase family. In terms of assembly, homotetramer. It depends on FMN as a cofactor.

It localises to the cell inner membrane. It catalyses the reaction (S)-lactate + A = pyruvate + AH2. Catalyzes the conversion of L-lactate to pyruvate. Is coupled to the respiratory chain. This chain is L-lactate dehydrogenase, found in Pseudomonas paraeruginosa (strain DSM 24068 / PA7) (Pseudomonas aeruginosa (strain PA7)).